A 282-amino-acid chain; its full sequence is MKKLLEGKTPANEITENLKKEIKNLKNDGINPTLCVIEVGDDPASKIYLRVKRNLAKKVGINEVGLHFPADTSQAELLGKIKELNQDPNINGIMVQLPVPPQIDPRAIFETIAPEKDADGFSPLNLGRLWEGQSDIIPATVRSILTLIDYYGIKMAGKNTVIIGRSVIVGKPLAAVLLERDATVTIAHSKTKNLADLTRNADVIISDVGKAHLVTEDMVKDGAVLIDVGMNRENGKLMGDVDFDTVAPKANAITPVPGGVGPLTVASLMKQAVILTRKQHGR.

NADP(+) contacts are provided by residues 164–166 (GRS) and S189.

It belongs to the tetrahydrofolate dehydrogenase/cyclohydrolase family. In terms of assembly, homodimer.

It carries out the reaction (6R)-5,10-methylene-5,6,7,8-tetrahydrofolate + NADP(+) = (6R)-5,10-methenyltetrahydrofolate + NADPH. It catalyses the reaction (6R)-5,10-methenyltetrahydrofolate + H2O = (6R)-10-formyltetrahydrofolate + H(+). Its pathway is one-carbon metabolism; tetrahydrofolate interconversion. In terms of biological role, catalyzes the oxidation of 5,10-methylenetetrahydrofolate to 5,10-methenyltetrahydrofolate and then the hydrolysis of 5,10-methenyltetrahydrofolate to 10-formyltetrahydrofolate. This chain is Bifunctional protein FolD, found in Lactobacillus gasseri (strain ATCC 33323 / DSM 20243 / BCRC 14619 / CIP 102991 / JCM 1131 / KCTC 3163 / NCIMB 11718 / NCTC 13722 / AM63).